The chain runs to 247 residues: V-type proton ATPase subunit D (247 aa).

The protein belongs to the V-ATPase D subunit family. As to quaternary structure, V-ATPase is a heteromultimeric enzyme made up of two complexes: the ATP-hydrolytic V1 complex and the proton translocation V0 complex. The V1 complex consists of three catalytic AB heterodimers that form a heterohexamer, three peripheral stalks each consisting of EG heterodimers, one central rotor including subunits D and F, and the regulatory subunits C and H. The proton translocation complex V0 consists of the proton transport subunit a, a ring of proteolipid subunits c9c'', rotary subunit d, subunits e and f, and the accessory subunits ATP6AP1/Ac45 and ATP6AP2/PRR. Interacts with SNX10.

Its subcellular location is the membrane. It localises to the cytoplasmic vesicle. The protein resides in the clathrin-coated vesicle membrane. It is found in the cytoplasm. The protein localises to the cytoskeleton. Its subcellular location is the microtubule organizing center. It localises to the centrosome. The protein resides in the cell projection. It is found in the cilium. Its function is as follows. Subunit of the V1 complex of vacuolar(H+)-ATPase (V-ATPase), a multisubunit enzyme composed of a peripheral complex (V1) that hydrolyzes ATP and a membrane integral complex (V0) that translocates protons. V-ATPase is responsible for acidifying and maintaining the pH of intracellular compartments and in some cell types, is targeted to the plasma membrane, where it is responsible for acidifying the extracellular environment. May play a role in cilium biogenesis through regulation of the transport and the localization of proteins to the cilium. This is V-type proton ATPase subunit D (Atp6v1d) from Mus musculus (Mouse).